The chain runs to 203 residues: SOSS complex subunit B1 (203 aa).

Positions 22–92 (IVLETGRVTK…TLYTGRGGDL (71 aa)) form a DNA-binding region, OB. The tract at residues 111–203 (PNPEYIAQQS…GKEPRRTGKR (93 aa)) is disordered. Residues 117 to 128 (AQQSQNKQAQAE) are compositionally biased toward polar residues. The span at 129 to 140 (SGTGTNSHNSSS) shows a compositional bias: low complexity. Positions 149–182 (ENGNGSNSSGPPTHQSTAPTHSTSGRITRSQPNH) are enriched in polar residues.

The protein belongs to the SOSS-B family. SOSS-B1 subfamily. As to quaternary structure, component of the SOSS complex, composed of soss-b (soss-b1/nabp2 or soss-b2/nabp1), soss-a/ints3 and soss-c/inip. SOSS complexes containing soss-b1/nabp2 are more abundant than complexes containing soss-b2/nabp1.

It is found in the nucleus. In terms of biological role, component of the SOSS complex, a multiprotein complex that functions downstream of the MRN complex to promote DNA repair and G2/M checkpoint. In the SOSS complex, acts as a sensor of single-stranded DNA that binds to single-stranded DNA. The SOSS complex associates with DNA lesions and influences diverse endpoints in the cellular DNA damage response including cell-cycle checkpoint activation, recombinational repair and maintenance of genomic stability. Required for efficient homologous recombination-dependent repair of double-strand breaks (DSBs). This chain is SOSS complex subunit B1 (nabp2), found in Xenopus tropicalis (Western clawed frog).